Consider the following 118-residue polypeptide: V-type proton ATPase subunit G 3 (118 aa).

The tract at residues 1 to 34 is disordered; sequence MTSQSQGIHQLLQAEKRAKDKLEEAKKRKGKRLK. Residues 5-54 are a coiled coil; that stretch reads SQGIHQLLQAEKRAKDKLEEAKKRKGKRLKQAKEEAMVEIDQYRMQRDKE. Residues 14–26 are compositionally biased toward basic and acidic residues; sequence AEKRAKDKLEEAK.

Belongs to the V-ATPase G subunit family. V-ATPase is a heteromultimeric enzyme made up of two complexes: the ATP-hydrolytic V1 complex and the proton translocation V0 complex. The V1 complex consists of three catalytic AB heterodimers that form a heterohexamer, three peripheral stalks each consisting of EG heterodimers, one central rotor including subunits D and F, and the regulatory subunits C and H. The proton translocation complex V0 consists of the proton transport subunit a, a ring of proteolipid subunits c9c'', rotary subunit d, subunits e and f, and the accessory subunits ATP6AP1/Ac45 and ATP6AP2/PRR. As to expression, kidney.

Its function is as follows. Subunit of the V1 complex of vacuolar(H+)-ATPase (V-ATPase), a multisubunit enzyme composed of a peripheral complex (V1) that hydrolyzes ATP and a membrane integral complex (V0) that translocates protons. V-ATPase is responsible for acidifying and maintaining the pH of intracellular compartments and in some cell types, is targeted to the plasma membrane, where it is responsible for acidifying the extracellular environment. This Homo sapiens (Human) protein is V-type proton ATPase subunit G 3 (ATP6V1G3).